Consider the following 450-residue polypeptide: ADP-specific phosphofructokinase (450 aa).

Residues 1-449 (MIPEHLSIYT…FLTYLEFLKR (449 aa)) form the ADPK domain. Mg(2+)-binding residues include Glu-260, Glu-290, and Asp-433. Asp-433 acts as the Proton acceptor in catalysis.

Belongs to the carbohydrate kinase PfkC family. It depends on Mg(2+) as a cofactor.

Its subcellular location is the cytoplasm. The catalysed reaction is beta-D-fructose 6-phosphate + ADP = beta-D-fructose 1,6-bisphosphate + AMP + H(+). It functions in the pathway carbohydrate degradation; glycolysis. Its function is as follows. Catalyzes the phosphorylation of fructose 6-phosphate to fructose 1,6-bisphosphate using ADP as the phosphate donor. The protein is ADP-specific phosphofructokinase of Pyrococcus horikoshii (strain ATCC 700860 / DSM 12428 / JCM 9974 / NBRC 100139 / OT-3).